A 607-amino-acid chain; its full sequence is Elongation factor 4 (607 aa).

The region spanning 11–193 (SKIRNFSIIA…QIVEKVPAPT (183 aa)) is the tr-type G domain. Residues 23 to 28 (DHGKST) and 140 to 143 (NKID) contribute to the GTP site.

Belongs to the TRAFAC class translation factor GTPase superfamily. Classic translation factor GTPase family. LepA subfamily.

Its subcellular location is the cell membrane. It carries out the reaction GTP + H2O = GDP + phosphate + H(+). In terms of biological role, required for accurate and efficient protein synthesis under certain stress conditions. May act as a fidelity factor of the translation reaction, by catalyzing a one-codon backward translocation of tRNAs on improperly translocated ribosomes. Back-translocation proceeds from a post-translocation (POST) complex to a pre-translocation (PRE) complex, thus giving elongation factor G a second chance to translocate the tRNAs correctly. Binds to ribosomes in a GTP-dependent manner. The protein is Elongation factor 4 of Bacillus cereus (strain ATCC 10987 / NRS 248).